We begin with the raw amino-acid sequence, 554 residues long: Urocanate hydratase (554 aa).

NAD(+) contacts are provided by residues 51-52 (GG), glutamine 129, 175-177 (GMG), glutamate 195, 241-242 (NA), 262-266 (QTSAH), 272-273 (YL), and tyrosine 321. Cysteine 409 is an active-site residue. Glycine 491 provides a ligand contact to NAD(+).

This sequence belongs to the urocanase family. It depends on NAD(+) as a cofactor.

It localises to the cytoplasm. It carries out the reaction 4-imidazolone-5-propanoate = trans-urocanate + H2O. Its pathway is amino-acid degradation; L-histidine degradation into L-glutamate; N-formimidoyl-L-glutamate from L-histidine: step 2/3. Catalyzes the conversion of urocanate to 4-imidazolone-5-propionate. The protein is Urocanate hydratase of Methylobacterium nodulans (strain LMG 21967 / CNCM I-2342 / ORS 2060).